The primary structure comprises 690 residues: Subtilisin-like protease 1 (690 aa).

The signal sequence occupies residues 1-25; sequence MMLNKKVVALCTLTLHLFCIFLCLG. A propeptide spans 26–219 (inhibition peptide); that stretch reads KEVRSEENGK…IESDKLVSAD (194 aa). The interval 99 to 131 is disordered; that stretch reads EKNKNDNHNNNNNNNNISSSSSSSSNTFGEEKE. Residues 106–124 are compositionally biased toward low complexity; that stretch reads HNNNNNNNNISSSSSSSSN. N-linked (GlcNAc...) asparagine glycosylation is present at Asn-114. Residues Asn-147, Thr-150, and Pro-152 each coordinate Ca(2+). Asn-173 is a glycosylation site (N-linked (GlcNAc...) asparagine). Residue Gly-207 participates in Ca(2+) binding. The N-linked (GlcNAc...) asparagine glycan is linked to Asn-263. Disordered stretches follow at residues 266-286 and 305-334; these read HAATSKRKRHSTNERGYDTFS and NNNNYYYSHSSNGHNSSSRNSSSSRSRPGK. Residues 305-330 show a composition bias toward low complexity; that stretch reads NNNNYYYSHSSNGHNSSSRNSSSSRS. 2 N-linked (GlcNAc...) asparagine glycosylation sites follow: Asn-319 and Asn-324. Glu-340 serves as a coordination point for Ca(2+). A Peptidase S8 domain is found at 345–663; that stretch reads QWGLDLSRLD…AGYADINKAV (319 aa). Disulfide bonds link Cys-371/Cys-481 and Cys-460/Cys-477. Asp-374 (charge relay system) is an active-site residue. Ca(2+)-binding residues include Asp-383, Glu-394, Arg-398, Phe-401, Asp-402, Asp-403, Asp-404, Asn-406, Ile-408, Asp-410, and Asp-411. Asn-419 carries N-linked (GlcNAc...) asparagine glycosylation. His-430 functions as the Charge relay system in the catalytic mechanism. Residues Ile-441, Asn-444, Ile-446, and Val-448 each contribute to the Ca(2+) site. N-linked (GlcNAc...) asparagine glycans are attached at residues Asn-490, Asn-503, and Asn-522. Cys-523 and Cys-536 are disulfide-bonded. Asn-605 is a glycosylation site (N-linked (GlcNAc...) asparagine). Catalysis depends on Ser-608, which acts as the Charge relay system. The N-linked (GlcNAc...) asparagine glycan is linked to Asn-677.

Belongs to the peptidase S8 family. As to quaternary structure, heterodimer between p54 form and prodomain p31; the interaction inhibits p54 catalytic activity. Heterodimer p31-p54 is monomeric at basic pH and dimeric at acidic pH; dimerization is driven by the N-terminal prodomain (p31). It depends on Ca(2+) as a cofactor. In terms of processing, the prodomain (p31) is cleaved, probably by autocatalysis, during the transport to or in the Golgi apparatus, and remains non-covalently associated with the p54 form as an inhibitor. p54 is further cleaved into the p47 form. This cleavage is likely occurring in the exoneme prior to egress and is mediated by PMX/plasmepsin X. The p54-to-p47 conversion can be also autocatalytic. Heterodimer p31-p54 is activated by cleavage of prodomain (p31) by the aspartic protease PMX; cleavage by PMX abolishes inhibitory capacity of p31. Primary autocatalytic processing of SUB1 is essential for parasite growth; the p54-to-p47 conversion is dispensable for SUB1 functions in the parasites. The disulfide bond between Cys-523 and Cys-536 acts as a redox-sensitive disulfide switch. The oxidized form is required for catalytic activity. Post-translationally, the relevance of N-glycosylation is not clear. In an insect expression system, SUB1 glycosylation appears to affect its processing into the active mature form suggesting that SUB1 may not be N-glycosylated in parasites.

It is found in the secreted. Its subcellular location is the parasitophorous vacuole lumen. The enzyme catalyses Hydrolysis of proteins with broad specificity for peptide bonds, and a preference for a large uncharged residue in P1. Hydrolyzes peptide amides.. With respect to regulation, p54 and probably p47 forms are inhibited by the non-covalent interaction with the cleaved propeptide. Inhibited by subtilisin propeptide-like protein SUB1-ProM. Inhibited by 3,4-dichloroisocoumarin (DCI) and 4-(hydroxymercuri)benzoic acid (pHMB). Partially inhibited by chymostatin, leupeptin, phenylmethylsulfonyl fluoride (PMSF), and 4-(2-aminoethyl)benzenesulfonyl fluoride. In terms of biological role, serine protease which plays an essential role in merozoite invasion of and egress from host erythrocytes by processing and activating various merozoite surface and parasitophorous vacuole proteins. Mediates the proteolytic maturation of serine proteases SERA4, SERA5 and SERA6 just prior to merozoite egress. Prior to merozoite egress, cleaves merozoite surface proteins MSP1, MSP6 and MSP7, which form the MSP1/6/7 complex, and thereby may prime the parasite cell surface for invasion of fresh erythrocytes. Prior to merozoite egress, cleaves MSRP2 converting it to MSRP2 p25 form, and RAP1 converting it to RAP1 p67 form. In Plasmodium falciparum, this protein is Subtilisin-like protease 1.